The following is a 262-amino-acid chain: Protein NEGATIVE GRAVITROPIC RESPONSE OF ROOTS (262 aa).

The disordered stretch occupies residues 1–40 (MKFFNWMQNKLGGKQENRKSNTSTSTTYAKPEPREEFSDW). The IGT motif motif lies at 43–49 (SLLAIGT).

Belongs to the LAZY family.

Functionally, involved in the control of root gravitropism. The chain is Protein NEGATIVE GRAVITROPIC RESPONSE OF ROOTS from Medicago truncatula (Barrel medic).